We begin with the raw amino-acid sequence, 740 residues long: ATP-dependent RNA helicase DDX1 (740 aa).

The tract at residues 1–295 (MAAFSEMGVM…APKALIVEPS (295 aa)) is necessary for interaction with HNRNPK. Residues 1 to 448 (MAAFSEMGVM…DTVHHVVVPV (448 aa)) are interaction with dsRNA. The interval 1–525 (MAAFSEMGVM…KIDCDNLEQY (525 aa)) is necessary for interaction with RELA. The Helicase ATP-binding domain maps to 2–428 (AAFSEMGVMP…SEKIMHFPTW (427 aa)). Residue 46–53 (AETGSGKT) participates in ATP binding. The B30.2/SPRY domain occupies 70-247 (DQQEGKKGKA…LKFNFGEEEF (178 aa)). Residues lysine 239 and lysine 268 each carry the N6-acetyllysine modification. The residue at position 281 (lysine 281) is an N6-acetyllysine; alternate. A Glycyl lysine isopeptide (Lys-Gly) (interchain with G-Cter in SUMO2); alternate cross-link involves residue lysine 281. Positions 370-373 (DEAD) match the DEAD box motif. Serine 481 carries the post-translational modification Phosphoserine. The region spanning 493-681 (KGEYAVRAIK…QVEPDIKVPV (189 aa)) is the Helicase C-terminal domain. Positions 525-740 (YFMQQGGGPD…YLPNQLFRTF (216 aa)) are necessary for interaction with HNRNPK.

It belongs to the DEAD box helicase family. DDX1 subfamily. In terms of assembly, found in a multi-helicase-TICAM1 complex at least composed of DHX36, DDX1, DDX21 and TICAM1; this complex exists in resting cells with or without poly(I:C) RNA ligand stimulation. Interacts with DHX36. Interacts (via B30.2/SPRY domain) with DDX21 (via N-terminus); this interaction serves as bridges to TICAM1. Interacts with FAM98A (via N- and C-terminus). Interacts with PHF5A (via C-terminus). Interacts with MBNL1. Interacts with CSTF2. Interacts with HNRNPK. Interacts with ATM. Interacts with RELA (via C-terminus). Component of the tRNA-splicing ligase complex. Interacts with PQBP1. Interacts with ERCC6. Phosphorylated by ATM kinase; phosphorylation is increased in response to ionizing radiation (IR).

It is found in the nucleus. It localises to the cytoplasm. The protein localises to the cytoplasmic granule. Its subcellular location is the cytosol. The protein resides in the mitochondrion. The catalysed reaction is ATP + H2O = ADP + phosphate + H(+). Acts as an ATP-dependent RNA helicase, able to unwind both RNA-RNA and RNA-DNA duplexes. Possesses 5' single-stranded RNA overhang nuclease activity. Possesses ATPase activity on various RNA, but not DNA polynucleotides. May play a role in RNA clearance at DNA double-strand breaks (DSBs), thereby facilitating the template-guided repair of transcriptionally active regions of the genome. Together with RELA, acts as a coactivator to enhance NF-kappa-B-mediated transcriptional activation. Acts as a positive transcriptional regulator of cyclin CCND2 expression. Binds to the cyclin CCND2 promoter region. Associates with chromatin at the NF-kappa-B promoter region via association with RELA. Binds to poly(A) RNA. May be involved in 3'-end cleavage and polyadenylation of pre-mRNAs. Component of the tRNA-splicing ligase complex required to facilitate the enzymatic turnover of catalytic subunit RTCB: together with archease (ZBTB8OS), acts by facilitating the guanylylation of RTCB, a key intermediate step in tRNA ligation. Component of a multi-helicase-TICAM1 complex that acts as a cytoplasmic sensor of viral double-stranded RNA (dsRNA) and plays a role in the activation of a cascade of antiviral responses including the induction of pro-inflammatory cytokines via the adapter molecule TICAM1. Specifically binds (via helicase ATP-binding domain) on both short and long poly(I:C) dsRNA. The sequence is that of ATP-dependent RNA helicase DDX1 (DDX1) from Bos taurus (Bovine).